The primary structure comprises 126 residues: Large ribosomal subunit protein bL12 (126 aa).

Belongs to the bacterial ribosomal protein bL12 family. As to quaternary structure, homodimer. Part of the ribosomal stalk of the 50S ribosomal subunit. Forms a multimeric L10(L12)X complex, where L10 forms an elongated spine to which 2 to 4 L12 dimers bind in a sequential fashion. Binds GTP-bound translation factors.

Functionally, forms part of the ribosomal stalk which helps the ribosome interact with GTP-bound translation factors. Is thus essential for accurate translation. This chain is Large ribosomal subunit protein bL12, found in Coxiella burnetii (strain CbuK_Q154) (Coxiella burnetii (strain Q154)).